We begin with the raw amino-acid sequence, 279 residues long: MKENEKVIMEKGIHTDFKENMTYGEYLQLDSLLSSQKRLSDHHDEMLFIVIHQASELWMKLILHELNAAIESIKQDKLQPAFKMLARVSKIQSQIIQSWDILATLTPSEYIEFRDSLGQASGFQSYQYRMIEYALGYKTPHALKIYEKDPELHARLHTALHAPSLYDVAIQALVKEGFPIHKDVLNRDITQPYEEDATVEAAWLEVYADVKKYWNLYQLAEKLIDIEDWLQQWRFRHMKTVERIIGHKMGTGGSSGVSYLKRVLDQRFFPELWNVRTKL.

Residues 48–52 (FIVIH), Tyr110, and Arg114 contribute to the substrate site. His237 is a binding site for heme. Thr251 provides a ligand contact to substrate.

The protein belongs to the tryptophan 2,3-dioxygenase family. In terms of assembly, homotetramer. Heme serves as cofactor.

The catalysed reaction is L-tryptophan + O2 = N-formyl-L-kynurenine. It functions in the pathway amino-acid degradation; L-tryptophan degradation via kynurenine pathway; L-kynurenine from L-tryptophan: step 1/2. Its function is as follows. Heme-dependent dioxygenase that catalyzes the oxidative cleavage of the L-tryptophan (L-Trp) pyrrole ring and converts L-tryptophan to N-formyl-L-kynurenine. Catalyzes the oxidative cleavage of the indole moiety. In Bacillus thuringiensis (strain Al Hakam), this protein is Tryptophan 2,3-dioxygenase.